A 340-amino-acid polypeptide reads, in one-letter code: Ketol-acid reductoisomerase (NADP(+)) (340 aa).

The KARI N-terminal Rossmann domain occupies 3–182; the sequence is VQMEYEKDVK…GAARVGLLET (180 aa). NADP(+)-binding positions include 26–29, Arg-49, Ser-53, and 83–86; these read YGSQ and DEIQ. His-108 is a catalytic residue. Residue Gly-134 coordinates NADP(+). A KARI C-terminal knotted domain is found at 183–328; sequence TYKEETEEDL…AELRKAMPFV (146 aa). Residues Asp-191, Glu-195, Glu-227, and Glu-231 each contribute to the Mg(2+) site. Position 252 (Ser-252) interacts with substrate.

Belongs to the ketol-acid reductoisomerase family. It depends on Mg(2+) as a cofactor.

The catalysed reaction is (2R)-2,3-dihydroxy-3-methylbutanoate + NADP(+) = (2S)-2-acetolactate + NADPH + H(+). It catalyses the reaction (2R,3R)-2,3-dihydroxy-3-methylpentanoate + NADP(+) = (S)-2-ethyl-2-hydroxy-3-oxobutanoate + NADPH + H(+). The protein operates within amino-acid biosynthesis; L-isoleucine biosynthesis; L-isoleucine from 2-oxobutanoate: step 2/4. It participates in amino-acid biosynthesis; L-valine biosynthesis; L-valine from pyruvate: step 2/4. Functionally, involved in the biosynthesis of branched-chain amino acids (BCAA). Catalyzes an alkyl-migration followed by a ketol-acid reduction of (S)-2-acetolactate (S2AL) to yield (R)-2,3-dihydroxy-isovalerate. In the isomerase reaction, S2AL is rearranged via a Mg-dependent methyl migration to produce 3-hydroxy-3-methyl-2-ketobutyrate (HMKB). In the reductase reaction, this 2-ketoacid undergoes a metal-dependent reduction by NADPH to yield (R)-2,3-dihydroxy-isovalerate. The protein is Ketol-acid reductoisomerase (NADP(+)) of Streptococcus thermophilus (strain ATCC BAA-491 / LMD-9).